The following is a 331-amino-acid chain: Glycerol-3-phosphate dehydrogenase [NAD(P)+] (331 aa).

Positions 11 and 101 each coordinate NADPH. Sn-glycerol 3-phosphate is bound by residues K101, G132, and S134. A136 provides a ligand contact to NADPH. Residues K188, D241, S251, R252, and N253 each contribute to the sn-glycerol 3-phosphate site. K188 acts as the Proton acceptor in catalysis. Residue R252 participates in NADPH binding. E278 provides a ligand contact to NADPH.

Belongs to the NAD-dependent glycerol-3-phosphate dehydrogenase family.

It localises to the cytoplasm. The enzyme catalyses sn-glycerol 3-phosphate + NAD(+) = dihydroxyacetone phosphate + NADH + H(+). It catalyses the reaction sn-glycerol 3-phosphate + NADP(+) = dihydroxyacetone phosphate + NADPH + H(+). It functions in the pathway membrane lipid metabolism; glycerophospholipid metabolism. Functionally, catalyzes the reduction of the glycolytic intermediate dihydroxyacetone phosphate (DHAP) to sn-glycerol 3-phosphate (G3P), the key precursor for phospholipid synthesis. This Phytoplasma mali (strain AT) protein is Glycerol-3-phosphate dehydrogenase [NAD(P)+].